The primary structure comprises 242 residues: Carboxy-S-adenosyl-L-methionine synthase (242 aa).

Residues Y39, 64–66, 89–90, 117–118, N132, and R199 contribute to the S-adenosyl-L-methionine site; these read GCS, DN, and DI.

Belongs to the class I-like SAM-binding methyltransferase superfamily. Cx-SAM synthase family. Homodimer.

It carries out the reaction prephenate + S-adenosyl-L-methionine = carboxy-S-adenosyl-L-methionine + 3-phenylpyruvate + H2O. Its function is as follows. Catalyzes the conversion of S-adenosyl-L-methionine (SAM) to carboxy-S-adenosyl-L-methionine (Cx-SAM). This Aliivibrio salmonicida (strain LFI1238) (Vibrio salmonicida (strain LFI1238)) protein is Carboxy-S-adenosyl-L-methionine synthase.